The following is a 244-amino-acid chain: Phosphoadenosine 5'-phosphosulfate reductase (244 aa).

The active-site Nucleophile; cysteine thiosulfonate intermediate is the cysteine 239.

It belongs to the PAPS reductase family. CysH subfamily.

The protein localises to the cytoplasm. The catalysed reaction is [thioredoxin]-disulfide + sulfite + adenosine 3',5'-bisphosphate + 2 H(+) = [thioredoxin]-dithiol + 3'-phosphoadenylyl sulfate. It functions in the pathway sulfur metabolism; hydrogen sulfide biosynthesis; sulfite from sulfate: step 3/3. Its function is as follows. Catalyzes the formation of sulfite from phosphoadenosine 5'-phosphosulfate (PAPS) using thioredoxin as an electron donor. The polypeptide is Phosphoadenosine 5'-phosphosulfate reductase (Enterobacter sp. (strain 638)).